The following is an 871-amino-acid chain: Speckle targeted PIP5K1A-regulated poly(A) polymerase (871 aa).

A Matrin-type zinc finger spans residues 16–46; it reads FRCCLCHITTANQPSLDAHLGGRKHRHLVEL. In terms of domain architecture, RRM spans 56 to 128; that stretch reads RSVFVSGFPR…RRLRVRPREQ (73 aa). ATP is bound at residue S205. 2 residues coordinate Mg(2+): D216 and D218. UTP contacts are provided by D216 and D218. Positions 252 to 321 are disordered; that stretch reads QALACTPASP…QEDQGDGDQG (70 aa). The span at 259-269 shows a compositional bias: pro residues; that stretch reads ASPPDSQPPAS. An ATP-binding site is contributed by N392. N392, R414, Y432, and H547 together coordinate UTP. The PAP-associated domain maps to 489 to 547; sequence LSSLLAQFFSCVSCWDLRGSLLSLREGQALSVAGGLPSNLSEGLRLGPMNLQDPFDLSH. The interval 596 to 871 is KA1; binds the bulging loops of U6 snRNA but is dispensable for terminal uridylyltransferase activity; that stretch reads SSPSSILSAT…LPQALRNLLK (276 aa). The tract at residues 636–684 is disordered; that stretch reads GTKRLRSEGGGPGEPPQGGTSKRAKLDGQKKSCEEGPEEQQGCAGEHGE. Basic and acidic residues predominate over residues 659–669; the sequence is AKLDGQKKSCE. At S748 the chain carries Phosphoserine.

The protein belongs to the DNA polymerase type-B-like family. As to quaternary structure, associates with the cleavage and polyadenylation specificity factor (CPSF) complex. Interacts with CPSF1 and CPSF3; the interaction is direct. Interacts with PIP5K1A. Mg(2+) serves as cofactor. The cofactor is Mn(2+). In terms of processing, phosphorylated by CK1 in the proline-rich (Pro-rich) region.

The protein resides in the nucleus. It localises to the nucleolus. Its subcellular location is the nucleus speckle. It carries out the reaction RNA(n) + UTP = RNA(n)-3'-uridine ribonucleotide + diphosphate. The enzyme catalyses RNA(n) + ATP = RNA(n)-3'-adenine ribonucleotide + diphosphate. Adenylyltransferase activity is specifically phosphatidylinositol 4,5-bisphosphate (PtdIns(4,5)P2). Functionally, poly(A) polymerase that creates the 3'-poly(A) tail of specific pre-mRNAs. Localizes to nuclear speckles together with PIP5K1A and mediates polyadenylation of a select set of mRNAs, such as HMOX1. In addition to polyadenylation, it is also required for the 3'-end cleavage of pre-mRNAs: binds to the 3'UTR of targeted pre-mRNAs and promotes the recruitment and assembly of the CPSF complex on the 3'UTR of pre-mRNAs. In addition to adenylyltransferase activity, also has uridylyltransferase activity. However, the ATP ratio is higher than UTP in cells, suggesting that it functions primarily as a poly(A) polymerase. Acts as a specific terminal uridylyltransferase for U6 snRNA in vitro: responsible for a controlled elongation reaction that results in the restoration of the four 3'-terminal UMP-residues found in newly transcribed U6 snRNA. Not involved in replication-dependent histone mRNA degradation. This chain is Speckle targeted PIP5K1A-regulated poly(A) polymerase (TUT1), found in Bos taurus (Bovine).